We begin with the raw amino-acid sequence, 310 residues long: MGILSFLPVLATESDWADCKSPQPWGHMLLWTAVLFLAPVAGTPAAPPKAVLKLEPQWINVLQEDSVTLTCRGTHSPESDSIQWFHNGNLIPTHTQPSYRFKANNNDSGEYTCQTGQTSLSDPVHLTVLSEWLVLQTPHLEFQEGETIVLRCHSWKDKPLVKVTFFQNGKSKKFSRSDPNFSIPQANHSHSGDYHCTGNIGYTLYSSKPVTITVQAPSSSPMGIIVAVVTGIAVAAIVAAVVALIYCRKKRISALPGYPECREMGETLPEKPANPTNPDEADKVGAENTITYSLLMHPDALEEPDDQNRI.

The N-terminal stretch at 1-42 (MGILSFLPVLATESDWADCKSPQPWGHMLLWTAVLFLAPVAG) is a signal peptide. The Extracellular portion of the chain corresponds to 43–217 (TPAAPPKAVL…KPVTITVQAP (175 aa)). Ig-like C2-type domains follow at residues 48 to 127 (PKAV…VHLT) and 131 to 213 (EWLV…VTIT). 2 disulfides stabilise this stretch: cysteine 71–cysteine 113 and cysteine 152–cysteine 196. 3 N-linked (GlcNAc...) asparagine glycosylation sites follow: asparagine 106, asparagine 180, and asparagine 187. Residues 218–240 (SSSPMGIIVAVVTGIAVAAIVAA) traverse the membrane as a helical segment. Over 241-310 (VVALIYCRKK…LEEPDDQNRI (70 aa)) the chain is Cytoplasmic. The ITIM motif signature appears at 290–295 (ITYSLL). Phosphotyrosine; by SRC-type Tyr-kinases is present on tyrosine 292.

Interacts with INPP5D/SHIP1. Interacts with FGR. Interacts with LYN. In terms of assembly, (Microbial infection) Isoform IIB1 interacts with measles virus protein N. Protein N is released in the blood following lysis of measles infected cells. This interaction presumably block inflammatory immune response. In terms of processing, phosphorylated by the SRC-type Tyr-kinases LYN and BLK. Is the most broadly distributed Fc-gamma-receptor. Expressed in monocyte, neutrophils, macrophages, basophils, eosinophils, Langerhans cells, B-cells, platelets cells and placenta (endothelial cells). Not detected in natural killer cells.

Its subcellular location is the cell membrane. Functionally, receptor for the Fc region of complexed or aggregated immunoglobulins gamma. Low affinity receptor. Involved in a variety of effector and regulatory functions such as phagocytosis of immune complexes and modulation of antibody production by B-cells. Binding to this receptor results in down-modulation of previous state of cell activation triggered via antigen receptors on B-cells (BCR), T-cells (TCR) or via another Fc receptor. Isoform IIB1 fails to mediate endocytosis or phagocytosis. Isoform IIB2 does not trigger phagocytosis. In Homo sapiens (Human), this protein is Low affinity immunoglobulin gamma Fc region receptor II-b (FCGR2B).